The sequence spans 238 residues: 2,3-bisphosphoglycerate-dependent phosphoglycerate mutase (238 aa).

Residues Arg-8–Asn-15, Thr-21–Gly-22, Arg-60, Glu-86–Tyr-89, Lys-97, Arg-113–Arg-114, and Gly-182–Asn-183 each bind substrate. His-9 functions as the Tele-phosphohistidine intermediate in the catalytic mechanism. Glu-86 functions as the Proton donor/acceptor in the catalytic mechanism.

It belongs to the phosphoglycerate mutase family. BPG-dependent PGAM subfamily. As to quaternary structure, homodimer.

The enzyme catalyses (2R)-2-phosphoglycerate = (2R)-3-phosphoglycerate. Its pathway is carbohydrate degradation; glycolysis; pyruvate from D-glyceraldehyde 3-phosphate: step 3/5. Functionally, catalyzes the interconversion of 2-phosphoglycerate and 3-phosphoglycerate. The chain is 2,3-bisphosphoglycerate-dependent phosphoglycerate mutase from Pelagibacter ubique (strain HTCC1062).